Here is a 123-residue protein sequence, read N- to C-terminus: Protein Wnt-3 (123 aa).

Residue Ser-1 is the site of O-palmitoleoyl serine; by PORCN attachment. An intrachain disulfide couples Cys-89 to Cys-104. N-linked (GlcNAc...) asparagine glycosylation is present at Asn-90.

Belongs to the Wnt family. Palmitoleoylation is required for efficient binding to frizzled receptors. Depalmitoleoylation leads to Wnt signaling pathway inhibition.

It localises to the secreted. The protein resides in the extracellular space. Its subcellular location is the extracellular matrix. Its function is as follows. Ligand for members of the frizzled family of seven transmembrane receptors. Functions in the canonical Wnt signaling pathway that results in activation of transcription factors of the TCF/LEF family. Required for normal embryonic development. The protein is Protein Wnt-3 (WNT-3) of Eptatretus stoutii (Pacific hagfish).